A 564-amino-acid polypeptide reads, in one-letter code: Probable diguanylate cyclase DgcQ (564 aa).

2 helical membrane passes run 20 to 40 and 360 to 380; these read LGPG…STLL and IALT…WYVI. A GGDEF domain is found at 428–563; it reads HPFSVIQVDL…GRNRVFASDN (136 aa). Asp436 provides a ligand contact to Mg(2+). Asn444, His449, and Asp453 together coordinate substrate. Glu479 contributes to the Mg(2+) binding site. The Proton acceptor role is filled by Glu479.

As to quaternary structure, homodimer. It depends on Mg(2+) as a cofactor.

The protein resides in the cell inner membrane. It carries out the reaction 2 GTP = 3',3'-c-di-GMP + 2 diphosphate. Its pathway is glycan metabolism; bacterial cellulose biosynthesis. The protein operates within purine metabolism; 3',5'-cyclic di-GMP biosynthesis. Catalyzes the synthesis of cyclic-di-GMP (c-di-GMP) via the condensation of 2 GTP molecules. Cyclic-di-GMP is a second messenger which controls cell surface-associated traits in bacteria. Involved in the regulation of cellulose production. The protein is Probable diguanylate cyclase DgcQ of Escherichia coli O157:H7.